Reading from the N-terminus, the 516-residue chain is Adenine DNA glycosylase (516 aa).

Positions 1–23 are enriched in basic residues; that stretch reads MKKLRASVRSHKKQPANHKRRGK. Residues 1–38 form a disordered region; it reads MKKLRASVRSHKKQPANHKRRGKCALSSSQAKPSGLDG. The active-site Proton donor/acceptor is the Glu105. The [4Fe-4S] cluster site is built by Cys261, Cys268, Cys271, and Cys277. A Nudix hydrolase domain is found at 335 to 467; the sequence is PREEYSATCV…AMKKVFRVYE (133 aa). The Nudix box motif lies at 376–398; sequence VTLEPSGQHQHKALLQELQHWSA. Residues 474 to 516 are disordered; the sequence is CKGSKRPQVCTPSSRKKPSRGQQVLDRFFQRHIPTHKPNSTTQ.

It belongs to the Nth/MutY family. [4Fe-4S] cluster is required as a cofactor. Expressed in brain, spleen, heart, liver and kidney.

It localises to the nucleus. It is found in the mitochondrion. It carries out the reaction Hydrolyzes free adenine bases from 7,8-dihydro-8-oxoguanine:adenine mismatched double-stranded DNA, leaving an apurinic site.. Its function is as follows. Involved in oxidative DNA damage repair. Initiates repair of A*oxoG to C*G by removing the inappropriately paired adenine base from the DNA backbone. Possesses both adenine and 2-OH-A DNA glycosylase activities. In Rattus norvegicus (Rat), this protein is Adenine DNA glycosylase (Mutyh).